A 30-amino-acid chain; its full sequence is Brevinin-2Rj (30 aa).

Cys-24 and Cys-30 are oxidised to a cystine.

In terms of tissue distribution, expressed by the skin glands.

Its subcellular location is the secreted. Functionally, antimicrobial peptide. The protein is Brevinin-2Rj of Pelophylax ridibundus (Marsh frog).